The chain runs to 295 residues: Host-inducible protein A (295 aa).

The segment at 1–20 is disordered; that stretch reads MHLDRSDSNGGSSRYTLDHE.

Belongs to the NopP family.

The chain is Host-inducible protein A from Rhizobium fredii (Sinorhizobium fredii).